The chain runs to 365 residues: Phospho-N-acetylmuramoyl-pentapeptide-transferase (365 aa).

Transmembrane regions (helical) follow at residues 22-42 (YISV…LALG), 74-94 (TMGG…WGNL), 95-115 (TSIY…IGFF), 134-154 (KFAL…YLLS), 168-188 (SLYI…IING), 201-221 (GLAI…AYIE), 240-260 (LAEV…FLWF), 267-287 (VFMG…IAVM), 292-312 (LIFF…MLQV), and 342-362 (KVVI…FAAI).

It belongs to the glycosyltransferase 4 family. MraY subfamily. Mg(2+) is required as a cofactor.

It localises to the cell inner membrane. It carries out the reaction UDP-N-acetyl-alpha-D-muramoyl-L-alanyl-gamma-D-glutamyl-meso-2,6-diaminopimeloyl-D-alanyl-D-alanine + di-trans,octa-cis-undecaprenyl phosphate = di-trans,octa-cis-undecaprenyl diphospho-N-acetyl-alpha-D-muramoyl-L-alanyl-D-glutamyl-meso-2,6-diaminopimeloyl-D-alanyl-D-alanine + UMP. Its pathway is cell wall biogenesis; peptidoglycan biosynthesis. Its function is as follows. Catalyzes the initial step of the lipid cycle reactions in the biosynthesis of the cell wall peptidoglycan: transfers peptidoglycan precursor phospho-MurNAc-pentapeptide from UDP-MurNAc-pentapeptide onto the lipid carrier undecaprenyl phosphate, yielding undecaprenyl-pyrophosphoryl-MurNAc-pentapeptide, known as lipid I. This Francisella tularensis subsp. holarctica (strain OSU18) protein is Phospho-N-acetylmuramoyl-pentapeptide-transferase.